Consider the following 304-residue polypeptide: 33 kDa chaperonin (304 aa).

2 disulfide bridges follow: cysteine 245–cysteine 247 and cysteine 278–cysteine 281.

Belongs to the HSP33 family. In terms of processing, under oxidizing conditions two disulfide bonds are formed involving the reactive cysteines. Under reducing conditions zinc is bound to the reactive cysteines and the protein is inactive.

The protein localises to the cytoplasm. In terms of biological role, redox regulated molecular chaperone. Protects both thermally unfolding and oxidatively damaged proteins from irreversible aggregation. Plays an important role in the bacterial defense system toward oxidative stress. The protein is 33 kDa chaperonin of Microcystis aeruginosa (strain NIES-843 / IAM M-2473).